A 191-amino-acid chain; its full sequence is Vascular endothelial growth factor A (191 aa).

The first 26 residues, 1–26, serve as a signal peptide directing secretion; the sequence is MNFLLTWIHWGLAALLYFHNAKVLQA. Disulfide bonds link cysteine 52-cysteine 94, cysteine 83-cysteine 128, and cysteine 87-cysteine 130. N-linked (GlcNAc...) asparagine glycosylation occurs at asparagine 101.

This sequence belongs to the PDGF/VEGF growth factor family. As to quaternary structure, homodimer; disulfide-linked. Also found as heterodimer with PGF. As to expression, expressed by the venom gland, and probably other tissues.

Its subcellular location is the secreted. Functionally, growth factor active in angiogenesis, vasculogenesis and endothelial cell growth. Induces endothelial cell proliferation, promotes cell migration, inhibits apoptosis and induces permeabilization of blood vessels. Binds to heparan sulfate and heparin. The polypeptide is Vascular endothelial growth factor A (Bitis gabonica (Gaboon adder)).